The primary structure comprises 393 residues: Na(+)/H(+) antiporter NhaA 2 (393 aa).

Helical transmembrane passes span 18–38 (SGGLLLIASAAAALLVANSQL), 53–73 (LSVQHWVNDALMAVFFLMVGL), 91–111 (ILPGAAAAAGMAVPALVYLAF), 120–140 (GWAIPAATDIAFALGVISLLG), 149–169 (VFLAALAIIDDLGAVIVIGLF), 172–192 (TGVSLMDLGLAAAGVAALVAL), 208–228 (LVLWFFTYRSGVHATIAGVLL), 263–283 (FIIVPIFGFANAGVSFSGLGM), 294–314 (VAAGLAIGKLVGIFGAVLLLV), 332–352 (GTTLLCGIGFTMSLFISLLAF), and 363–383 (IGILIGSLVAGLAGFIVLRFS).

Belongs to the NhaA Na(+)/H(+) (TC 2.A.33) antiporter family.

It localises to the cell inner membrane. The catalysed reaction is Na(+)(in) + 2 H(+)(out) = Na(+)(out) + 2 H(+)(in). In terms of biological role, na(+)/H(+) antiporter that extrudes sodium in exchange for external protons. The protein is Na(+)/H(+) antiporter NhaA 2 of Brucella anthropi (strain ATCC 49188 / DSM 6882 / CCUG 24695 / JCM 21032 / LMG 3331 / NBRC 15819 / NCTC 12168 / Alc 37) (Ochrobactrum anthropi).